Here is a 146-residue protein sequence, read N- to C-terminus: UPF0742 protein PB2B2.17c (146 aa).

The chain crosses the membrane as a helical span at residues 38–60 (LTVKYCLAVKLLIYLLYCWYIYS).

Belongs to the UPF0742 family.

The protein localises to the cytoplasm. It is found in the nucleus membrane. This chain is UPF0742 protein PB2B2.17c, found in Schizosaccharomyces pombe (strain 972 / ATCC 24843) (Fission yeast).